The primary structure comprises 419 residues: G protein-activated inward rectifier potassium channel 4 (419 aa).

Residues 1 to 24 (MAGDSRNAMNQDMEIGVTPRDPKK) are disordered. Topologically, residues 1 to 86 (MAGDSRNAMN…LFTTLVDLKW (86 aa)) are cytoplasmic. Residue S5 is modified to Phosphoserine. A helical transmembrane segment spans residues 87-111 (RFNLLVFTMVYTITWLFFGFIWWLI). At 112 to 135 (AYIRGDLDHVGDREWIPCVENLSG) the chain is on the extracellular side. Residues 136 to 147 (FVSAFLFSIETE) constitute an intramembrane region (helical; Pore-forming). The pore-forming intramembrane region spans 148-154 (TTIGYGF). Positions 149–154 (TIGYGF) match the Selectivity filter motif. The Extracellular segment spans residues 155–163 (RVITEKCPE). The chain crosses the membrane as a helical span at residues 164-185 (GIVLLLVQAILGSIVNAFMVGC). At 186–419 (MFVKISQPKK…SGSQETKDSA (234 aa)) the chain is on the cytoplasmic side. The tract at residues 381–419 (PSPPLPGGCVGAELGAEAEQEGEEEPEGLSGSQETKDSA) is disordered. Residues 396-407 (AEAEQEGEEEPE) show a composition bias toward acidic residues.

The protein belongs to the inward rectifier-type potassium channel (TC 1.A.2.1) family. KCNJ5 subfamily. In terms of assembly, associates with KCNJ3/GIRK1 or KCNJ6/GIRK2 to form a G-protein-activated heteromultimer pore-forming unit. The resulting inward current is much larger.

It is found in the membrane. The enzyme catalyses K(+)(in) = K(+)(out). Its activity is regulated as follows. Heteromultimer composed of KCNJ3/GIRK1 and KCNJ5/GIRK4 is activated by phosphatidylinositol 4,5 biphosphate (PtdIns(4,5)P2). Inward rectifier potassium channels are characterized by a greater tendency to allow potassium to flow into the cell rather than out of it. Their voltage dependence is regulated by the concentration of extracellular potassium; as external potassium is raised, the voltage range of the channel opening shifts to more positive voltages. The inward rectification is mainly due to the blockage of outward current by internal magnesium. This receptor plays a crucial role in regulating the heartbeat. Can be blocked by external barium. This potassium channel is controlled by G proteins. The sequence is that of G protein-activated inward rectifier potassium channel 4 (KCNJ5) from Bos taurus (Bovine).